Reading from the N-terminus, the 243-residue chain is Carboxy-S-adenosyl-L-methionine synthase (243 aa).

S-adenosyl-L-methionine is bound by residues Tyr-40, 65 to 67, 90 to 91, 118 to 119, Asn-133, and Arg-200; these read GCS, DN, and DI.

This sequence belongs to the class I-like SAM-binding methyltransferase superfamily. Cx-SAM synthase family. As to quaternary structure, homodimer.

The enzyme catalyses prephenate + S-adenosyl-L-methionine = carboxy-S-adenosyl-L-methionine + 3-phenylpyruvate + H2O. Its function is as follows. Catalyzes the conversion of S-adenosyl-L-methionine (SAM) to carboxy-S-adenosyl-L-methionine (Cx-SAM). This chain is Carboxy-S-adenosyl-L-methionine synthase, found in Shewanella loihica (strain ATCC BAA-1088 / PV-4).